The chain runs to 143 residues: Large ribosomal subunit protein uL16 (143 aa).

The protein belongs to the universal ribosomal protein uL16 family. In terms of assembly, part of the 50S ribosomal subunit.

Binds 23S rRNA and is also seen to make contacts with the A and possibly P site tRNAs. This Fusobacterium nucleatum subsp. nucleatum (strain ATCC 25586 / DSM 15643 / BCRC 10681 / CIP 101130 / JCM 8532 / KCTC 2640 / LMG 13131 / VPI 4355) protein is Large ribosomal subunit protein uL16.